The following is a 288-amino-acid chain: Centromere protein P (288 aa).

A coiled-coil region spans residues 1 to 71 (MDAELAEVRA…HLESELSFLS (71 aa)). S38 is modified (phosphoserine).

The protein belongs to the CENP-P/CTF19 family. In terms of assembly, component of the CENPA-CAD complex, composed of CENPI, CENPK, CENPL, CENPO, CENPP, CENPQ, CENPR and CENPS. The CENPA-CAD complex interacts with the CENPA-NAC complex, at least composed of CENPA, CENPC, CENPH, CENPM, CENPN, CENPT and CENPU.

The protein localises to the nucleus. The protein resides in the chromosome. Its subcellular location is the centromere. Component of the CENPA-CAD (nucleosome distal) complex, a complex recruited to centromeres which is involved in assembly of kinetochore proteins, mitotic progression and chromosome segregation. May be involved in incorporation of newly synthesized CENPA into centromeres via its interaction with the CENPA-NAC complex. In Homo sapiens (Human), this protein is Centromere protein P (CENPP).